The chain runs to 124 residues: Holo-[acyl-carrier-protein] synthase (124 aa).

Mg(2+) is bound by residues Asp5 and Glu51.

It belongs to the P-Pant transferase superfamily. AcpS family. It depends on Mg(2+) as a cofactor.

Its subcellular location is the cytoplasm. It catalyses the reaction apo-[ACP] + CoA = holo-[ACP] + adenosine 3',5'-bisphosphate + H(+). Its function is as follows. Transfers the 4'-phosphopantetheine moiety from coenzyme A to a Ser of acyl-carrier-protein. The polypeptide is Holo-[acyl-carrier-protein] synthase (Hydrogenobaculum sp. (strain Y04AAS1)).